A 358-amino-acid chain; its full sequence is Probable dual-specificity RNA methyltransferase RlmN 1 (358 aa).

The region spanning 101 to 326 (MQAGGTLCIS…REKGFYTLLR (226 aa)) is the Radical SAM core domain. Cysteines 108 and 337 form a disulfide. Cys-115, Cys-119, and Cys-122 together coordinate [4Fe-4S] cluster. S-adenosyl-L-methionine contacts are provided by residues 162–163 (GE), Ser-194, 218–220 (SLN), and Asn-294. Cys-337 (S-methylcysteine intermediate) is an active-site residue.

Belongs to the radical SAM superfamily. RlmN family. It depends on [4Fe-4S] cluster as a cofactor.

It is found in the cytoplasm. The enzyme catalyses adenosine(2503) in 23S rRNA + 2 reduced [2Fe-2S]-[ferredoxin] + 2 S-adenosyl-L-methionine = 2-methyladenosine(2503) in 23S rRNA + 5'-deoxyadenosine + L-methionine + 2 oxidized [2Fe-2S]-[ferredoxin] + S-adenosyl-L-homocysteine. It carries out the reaction adenosine(37) in tRNA + 2 reduced [2Fe-2S]-[ferredoxin] + 2 S-adenosyl-L-methionine = 2-methyladenosine(37) in tRNA + 5'-deoxyadenosine + L-methionine + 2 oxidized [2Fe-2S]-[ferredoxin] + S-adenosyl-L-homocysteine. Its function is as follows. Specifically methylates position 2 of adenine 2503 in 23S rRNA and position 2 of adenine 37 in tRNAs. The protein is Probable dual-specificity RNA methyltransferase RlmN 1 of Protochlamydia amoebophila (strain UWE25).